The sequence spans 122 residues: Large ribosomal subunit protein uL14 (122 aa).

It belongs to the universal ribosomal protein uL14 family. In terms of assembly, part of the 50S ribosomal subunit. Forms a cluster with proteins L3 and L19. In the 70S ribosome, L14 and L19 interact and together make contacts with the 16S rRNA in bridges B5 and B8.

Binds to 23S rRNA. Forms part of two intersubunit bridges in the 70S ribosome. The protein is Large ribosomal subunit protein uL14 of Chloroflexus aggregans (strain MD-66 / DSM 9485).